The following is a 178-amino-acid chain: Bifunctional protein PyrR (178 aa).

Positions 99 to 111 (IIIIDDVLYTCRT) match the PRPP-binding motif.

This sequence belongs to the purine/pyrimidine phosphoribosyltransferase family. PyrR subfamily. As to quaternary structure, homodimer and homohexamer; in equilibrium.

It carries out the reaction UMP + diphosphate = 5-phospho-alpha-D-ribose 1-diphosphate + uracil. Its function is as follows. Regulates transcriptional attenuation of the pyrimidine nucleotide (pyr) operon by binding in a uridine-dependent manner to specific sites on pyr mRNA. This disrupts an antiterminator hairpin in the RNA and favors formation of a downstream transcription terminator, leading to a reduced expression of downstream genes. Also displays a weak uracil phosphoribosyltransferase activity which is not physiologically significant. The chain is Bifunctional protein PyrR from Clostridium beijerinckii (strain ATCC 51743 / NCIMB 8052) (Clostridium acetobutylicum).